A 602-amino-acid chain; its full sequence is UvrABC system protein C (602 aa).

Residues 17 to 94 (TTSGCYKMYS…IKEHKPDYNI (78 aa)) enclose the GIY-YIG domain. Residues 199–234 (SKLLDEIEIKMKEVIKREDFESAIKLKETKRSLIEI) enclose the UVR domain.

The protein belongs to the UvrC family. In terms of assembly, interacts with UvrB in an incision complex.

It is found in the cytoplasm. Its function is as follows. The UvrABC repair system catalyzes the recognition and processing of DNA lesions. UvrC both incises the 5' and 3' sides of the lesion. The N-terminal half is responsible for the 3' incision and the C-terminal half is responsible for the 5' incision. This is UvrABC system protein C from Borrelia turicatae (strain 91E135).